Reading from the N-terminus, the 840-residue chain is Recyclin-1 (840 aa).

The F-box domain occupies 1–48; sequence MDDLLKVPEIVTNIASYLSTVDYLSFQQVNKRVYAIINGKNDSKYWSL. Ser409 carries the phosphoserine modification.

As to quaternary structure, interacts with SKP1.

It localises to the cytoplasm. The protein resides in the bud neck. Its subcellular location is the cell tip. In terms of biological role, involved in recycling plasma membrane proteins internalized by endocytosis. Required for recycling of the v-SNARE SNC1. The sequence is that of Recyclin-1 (RCY1) from Saccharomyces cerevisiae (strain ATCC 204508 / S288c) (Baker's yeast).